Consider the following 367-residue polypeptide: (E)-2-epi-beta-caryophyllene synthase (367 aa).

The Mg(2+) site is built by aspartate 93, asparagine 234, and serine 238. The DDXXE motif motif lies at 93–97 (DDIAE).

Belongs to the terpene synthase family. It depends on Mg(2+) as a cofactor. The cofactor is Mn(2+).

It carries out the reaction (2E,6E)-farnesyl diphosphate = (E)-2-epi-beta-caryophyllene + diphosphate. It participates in secondary metabolite biosynthesis; terpenoid biosynthesis. In terms of biological role, sesquiterpene synthase converting farnesyl diphosphate to (E)-2-epi-beta-caryophyllene as the major product, and to two other unidentified sesquiterpenes. Has no diterpene synthase activity. This chain is (E)-2-epi-beta-caryophyllene synthase, found in Selaginella moellendorffii (Spikemoss).